The primary structure comprises 994 residues: Translocase of chloroplast 108, chloroplastic (994 aa).

Disordered regions lie at residues 14–61 (KEAS…EDEP), 84–124 (TTDL…DPSV), and 152–287 (AVDG…DETR). Polar residues-rich tracts occupy residues 37–53 (GETT…ANES) and 84–98 (TTDL…TPSN). A compositionally biased stretch (basic and acidic residues) spans 99 to 121 (AEKESPEATEVRIVEEGKLEKAD). A compositionally biased stretch (acidic residues) spans 166-197 (NDGDTDANTADEDNENDEDDVDEDEDEDDADM). Residues 249–268 (ASDSPGRNTQRPNGALSTQI) are compositionally biased toward polar residues. Over residues 269 to 280 (TSTTDESASSDA) the composition is skewed to low complexity. An AIG1-type G domain is found at 360–589 (DFACTILVLG…KLQETTAPGR (230 aa)). Residues 369-376 (GKTGVGKS) form a G1 region. 372–377 (GVGKSS) serves as a coordination point for GTP. Residue Ser376 participates in Mg(2+) binding. The segment at 395-399 (PSTNK) is G2. The segment at 416-419 (DTPG) is G3. The G4 stretch occupies residues 488–491 (THAS). GTP contacts are provided by residues His489 and 537–538 (EN). A G5 region spans residues 537–539 (ENH). 2 disordered regions span residues 616–659 (LPDE…EDLT) and 691–716 (EAKK…EAGN). Acidic residues predominate over residues 620–643 (QAGESDESDDDEEEEDSDADDYDE). Residues 650-659 (LSKEELEDLT) show a composition bias toward basic and acidic residues. The span at 705–714 (AEAEEAEDEA) shows a compositional bias: acidic residues. Residues 969–989 (MVLIGIVPILRSLINCRFGFG) form a helical membrane-spanning segment.

It belongs to the TRAFAC class TrmE-Era-EngA-EngB-Septin-like GTPase superfamily. AIG1/Toc34/Toc159-like paraseptin GTPase family. TOC159 subfamily. In terms of assembly, part of the TOC core complex. Mg(2+) serves as cofactor.

It localises to the plastid. Its subcellular location is the chloroplast outer membrane. In terms of biological role, GTPase involved in protein precursor import into chloroplasts. Seems to recognize chloroplast-destined precursor proteins and regulate their presentation to the translocation channel through GTP hydrolysis. Probably specialized in the import of nuclear encoded non-photosynthetic preproteins from the cytoplasm to the chloroplast. The protein is Translocase of chloroplast 108, chloroplastic of Physcomitrium patens (Spreading-leaved earth moss).